The following is a 301-amino-acid chain: Phosphoglycolate phosphatase 2 (301 aa).

Asp-19 (nucleophile) is an active-site residue.

This sequence belongs to the HAD-like hydrolase superfamily. CbbY/CbbZ/Gph/YieH family.

The catalysed reaction is 2-phosphoglycolate + H2O = glycolate + phosphate. In terms of biological role, dephosphorylates 2-phosphoglycolate, but does not contribute to photorespiratory metabolism. The protein is Phosphoglycolate phosphatase 2 (PGLP2) of Arabidopsis thaliana (Mouse-ear cress).